Reading from the N-terminus, the 711-residue chain is Polyribonucleotide nucleotidyltransferase (711 aa).

The Mg(2+) site is built by D486 and D492. Residues 553 to 612 (PRIHTIKINPDKIKDVIGKGGSVIRALTEETGTTIEIEDDGTVKIAATDGEKAKHAIRRI) enclose the KH domain. One can recognise an S1 motif domain in the interval 622–690 (GRVYTGKVTR…RQGRIRLSIK (69 aa)). Positions 689 to 711 (IKEATEQSQPAAAPEAPAAEQGE) are disordered. Residues 694–711 (EQSQPAAAPEAPAAEQGE) are compositionally biased toward low complexity.

This sequence belongs to the polyribonucleotide nucleotidyltransferase family. In terms of assembly, component of the RNA degradosome, which is a multiprotein complex involved in RNA processing and mRNA degradation. Mg(2+) serves as cofactor.

The protein localises to the cytoplasm. It catalyses the reaction RNA(n+1) + phosphate = RNA(n) + a ribonucleoside 5'-diphosphate. Functionally, involved in mRNA degradation. Catalyzes the phosphorolysis of single-stranded polyribonucleotides processively in the 3'- to 5'-direction. This is Polyribonucleotide nucleotidyltransferase from Escherichia coli O8 (strain IAI1).